A 486-amino-acid polypeptide reads, in one-letter code: uncharacterized protein (486 aa).

2 ABC transporter domains span residues 2 to 241 (VEFK…KVFV) and 249 to 486 (FEKD…LLFL). Residue 36-43 (GKNGEGKS) participates in ATP binding.

It belongs to the ABC transporter superfamily.

This is an uncharacterized protein from Borreliella burgdorferi (strain ATCC 35210 / DSM 4680 / CIP 102532 / B31) (Borrelia burgdorferi).